A 65-amino-acid chain; its full sequence is Small ribosomal subunit protein eS27 (65 aa).

Cys-21, Cys-24, Cys-40, and Cys-43 together coordinate Zn(2+). The segment at 21 to 43 (CRDCGNVQVVFARPSSTVTCNIC) adopts a C4-type zinc-finger fold.

Belongs to the eukaryotic ribosomal protein eS27 family. Part of the 30S ribosomal subunit. Zn(2+) is required as a cofactor.

This is Small ribosomal subunit protein eS27 from Thermoplasma acidophilum (strain ATCC 25905 / DSM 1728 / JCM 9062 / NBRC 15155 / AMRC-C165).